Consider the following 2513-residue polypeptide: MNNFKNINLIEKGVAIVGIGFRIPSGNNENSISSPDDLFNNLKNGFDGVSSTSERWSDNFHKLGEISSPNAGLLPFNECKSFDPLFFGINPSEAPLIDPQQRLLLKCTWEALEDASIDPISIRGTNTSVFIGSSNIDYLHTNKHQDSVLKNVIAQSTCAISNRISYCFDFNGPSLSIDTACSSSLNAISQGYHSILNGTSDISIVGGVNLILDVETTKAYSYLSMLSKTHGKCKAFDESGDGFTRGECAGVVVLKNLQDAVKDGNRIYCVINGSSSNVDGNGNMDKVNFYSPSKQSQFNNINSAFKSTNEKLSVNEIQYIEAHGTGTKTGDPIETEAISMAFKNRDKSTPILIGSIKSNIGHCEAGSGVASLIKCCLMFKYQCFLPNIHFKNPNPLIKFNEWNLKVVTSPIPFNRKNEKPVSMMINNFGVTGSNCCLLISEFKKQDYEPYENNYKSNNKNILIPFSANSSNSLNQYQSKFKNIINNQFNFIDFTANQIYSKSNYLCQRSVIAASNSNELFEKILNKKQIQTKNSIISNMSFKGKNPITIFVFSGQGSQYPKMALELYNNEVIFKKSIDLINSKLSKYYGYSVLEKLRSIGDDDTTSIHDPNISQPAVCMISVSLFELYCHWGVNPSFILGHSLGEISASYCSGMIDLDTFCYTVYHRSIAQTKTHGNGRMLSINISDEEFKSMYSQKYPQIEIACYNSPQSIVVAGNESILNEISKELKEKEIFTAMLGSLSSFHTSSQQCTKDSVLKLNIQSNQPKVPIFSTVTTNLFNESNRFNSQYVYDNIINPVRFTQTISNIYKHIESNQLNNDIVFIEIAPHPTLSFYIKQMVPSSLNESVSVYSALHKKKNDVEEFQQTISNLYCQNGYNINFKCQFNNKKSNKKIDLPLYQWSDETYFAQTQTLEQHREEGPPIDHLGISNSFISPFNNSYKTLIDINNKPFQYLKGHMVKGKYYFPGCGYIDNIIQLYKNQDIFISFIEFKTPLILIEGINQCLQTNIQQTGKSEYRAQFHFKDQKSNQWTQSSNSNFQLLDHGNDIPSNYNIEEIIKNKCNLSKLTKNELYTHIKSKTGLNYTGVFKGVTECYIGDNCSLSVVSLESQTNSFLNIPILDTCLHGMLVLINDQCQIVFDKTIGFKYYSSNIPAYFKENKDCFYVYSHLKSKSADSYHGSIIVMLSDGSVLYEIQEVVCKSLIPIKDSLKIEYPNDELYKVHLQSKDSQIPTPSYFKSIIYENDSFHSIVNIPEDLFKYISTLFYKDIIKRCPEININKINSHSVNEIISSFSKISKHERLFRFVFETIKENGILNSLEENDDAYFEFNELVIKSSRIISKLLFPLENDNDNEDLPQSLFQNGLMDKFYKCNNFKKKNQIISHVIKHSIKEIINNNIIIRILEFGGGTASLSVEVIGEIVTLLQENPNYQVEIEYTWSDISPAFIADAKNKINKIINDAAITNGLNVIYLPLTIGESLIETQSIKPSYYDFVIMSNVLHVVKDIKQVVEQMYQLLTPNGQLVFVEPPYKSILIDSIVGSFDQWWSFTDTDIRKDRCGMSQQSWYQLLKTCNFKDIVMSKECIFGSVIQAQKPPISLLNSQPKHDNIIIYGGGNNSRFFENIKLYSNSKSLIQIETIQEFNQFINKSTITNDSIIYFIKTLETLSLDNFAQITLEYIEINKKLLQINSLCKHVLIVSDSRKTNYLASSVVGAARYFDEFQQLKLHTLDFDYDSTQNYINSKNNKMVQFINILTDSKTNVHKEMIIINNKVYYEIVQKEKNLKLKYNSESFENQNNLMCSLSPNLEYQLQSKQIKLRDNQVEVKTIATGINYKDYLNFSGSNSNGDDNTGLPQFGYEFSGIITRVGNNVKDYKVGDNVFGLSNSCTSSHIVTNFKNIQLKPSKISHIEASSIPIDYLASFISLFNVGSLNIEDNESILIHLGSDGFGLSTFEILKWKGFKSNLFVTVNSDETKQYLLDRYGDFISGIYSNTDKSYVTEIKNELIKLGSKKKGVDLILNTLPSDFMDSNFELLTKNARIIDLTSNHLNQSEFLKNINFKYNHSYHNFQLSLFQKNKIQKCLNEISNAIENGELKTIPIKEFTNLNIKDAIKYITNGNIEKITVSHDHEIYSDIIYRYLDEKEFSILKSNYQINSNNLGKNILITGQSGIILEILKWIIKYSNINTIENVIILSRSSLKWELELLINQTKLSNNNIKFHFKSIDVGDSEQVDNAINEILNENQQITNIDSIYHFAFQQITCKVQEINMKHLDISHGAKSMGAINLHNQSIKRNWKLINFVMASSAISLIGSTDLCTYACANTLLDSFSKYRVSLGLPSACINFGSIESTGFVSKNESVSVFLDGGGFHPTPINQVLGLLDLQIQNSGKFTNSMLSNFKPSKFKNNQQISLFLKFDYLMNLKNNSEQTKKENIGNKNIDELFIEKVSELFSTDESKINKNLRLIDYGADSLIIVQLKNWIDKEIGINLITIQQLQNNTINISIKMILNSLMKNNQCGREI.

The Ketosynthase family 3 (KS3) domain maps to Glu11 to Glu441. Residues Cys181, His323, and His362 each act as for beta-ketoacyl synthase activity in the active site. The interval Gly632–Tyr665 is acyl/malonyl transferase. Residue Ser642 is the For acyl/malonyl transferase activity of the active site. Positions Ile922–Asn1044 are N-terminal hotdog fold. The region spanning Ile922–Ser1206 is the PKS/mFAS DH domain. His956 serves as the catalytic Proton acceptor; for dehydratase activity. Positions Asn1061–Ser1206 are C-terminal hotdog fold. Asp1119 functions as the Proton donor; for dehydratase activity in the catalytic mechanism. The 78-residue stretch at Ile2426–Leu2503 folds into the Carrier domain. Position 2463 is an O-(pantetheine 4'-phosphoryl)serine (Ser2463).

Requires pantetheine 4'-phosphate as cofactor.

Its function is as follows. Probable polyketide synthase. The sequence is that of Probable polyketide synthase 7 (pks7) from Dictyostelium discoideum (Social amoeba).